We begin with the raw amino-acid sequence, 115 residues long: Large ribosomal subunit protein bL20 (115 aa).

It belongs to the bacterial ribosomal protein bL20 family.

In terms of biological role, binds directly to 23S ribosomal RNA and is necessary for the in vitro assembly process of the 50S ribosomal subunit. It is not involved in the protein synthesizing functions of that subunit. This chain is Large ribosomal subunit protein bL20, found in Parasynechococcus marenigrum (strain WH8102).